A 245-amino-acid chain; its full sequence is 14-3-3 protein zeta/delta (245 aa).

The residue at position 1 (Met1) is an N-acetylmethionine. N6-acetyllysine is present on Lys3. Ser58 is subject to Phosphoserine; by PKA. Residue Lys68 is modified to N6-acetyllysine. 3 positions are modified to phosphoserine: Ser184, Ser207, and Ser210. At Thr232 the chain carries Phosphothreonine; by CK1.

It belongs to the 14-3-3 family. In terms of assembly, homodimer. Heterodimerizes with YWHAE. Homo- and heterodimerization is inhibited by phosphorylation on Ser-58. Interacts with FOXO4, NOXA1, SSH1 and ARHGEF2. Interacts with CDK16 and with WEE1 (C-terminal). Interacts with MLF1 (phosphorylated form); the interaction retains it in the cytoplasm. Interacts with BSPRY. Interacts with Thr-phosphorylated ITGB2. Interacts with Pseudomonas aeruginosa exoS (unphosphorylated form). Interacts with BAX; the interaction occurs in the cytoplasm. Under stress conditions, MAPK8-mediated phosphorylation releases BAX to mitochondria. Interacts with phosphorylated RAF1; the interaction is inhibited when YWHAZ is phosphorylated on Thr-232. Interacts with TP53; the interaction enhances p53 transcriptional activity. The Ser-58 phosphorylated form inhibits this interaction and p53 transcriptional activity. Interacts with ABL1 (phosphorylated form); the interaction retains ABL1 in the cytoplasm. Interacts with PKA-phosphorylated AANAT; the interaction modulates AANAT enzymatic activity by increasing affinity for arylalkylamines and acetyl-CoA and protecting the enzyme from dephosphorylation and proteasomal degradation. It may also prevent thiol-dependent inactivation. Interacts with AKT1; the interaction phosphorylates YWHAZ and modulates dimerization. Interacts with GAB2. Interacts with SAMSN1. Interacts with BCL2L11 and TLK2. Interacts with the 'Thr-369' phosphorylated form of DAPK2. Interacts with PI4KB, TBC1D22A and TBC1D22B. Interacts with ZFP36L1 (via phosphorylated form); this interaction occurs in a p38 MAPK- and AKT-signaling pathways. Interacts with SLITRK1. Interacts with AK5, LDB1, MADD, PDE1A and SMARCB1. Interacts with ARHGEF7 and GIT1. Interacts with MEFV. Interacts with ADAM22 (via C-terminus). Post-translationally, the delta, brain-specific form differs from the zeta form in being phosphorylated. Phosphorylation on Ser-184 by MAPK8; promotes dissociation of BAX and translocation of BAX to mitochondria. Phosphorylation on Thr-232; inhibits binding of RAF1. Phosphorylated on Ser-58 by PKA and protein kinase C delta type catalytic subunit in a sphingosine-dependent fashion. Phosphorylation on Ser-58 by PKA; disrupts homodimerization and heterodimerization with YHAE and TP53.

The protein resides in the cytoplasm. Its subcellular location is the melanosome. Its function is as follows. Adapter protein implicated in the regulation of a large spectrum of both general and specialized signaling pathways. Binds to a large number of partners, usually by recognition of a phosphoserine or phosphothreonine motif. Binding generally results in the modulation of the activity of the binding partner. Promotes cytosolic retention and inactivation of TFEB transcription factor by binding to phosphorylated TFEB. Induces ARHGEF7 activity on RAC1 as well as lamellipodia and membrane ruffle formation. In neurons, regulates spine maturation through the modulation of ARHGEF7 activity. The sequence is that of 14-3-3 protein zeta/delta (Ywhaz) from Mus musculus (Mouse).